Reading from the N-terminus, the 1406-residue chain is MHQTLCLNPESLKMSACSDFVEHIWKPGSCKNCFCLRSDHQLVAGPPQPRAGSLPPPPRLPPRPENCRLEDEGVNSSPYSKPTIAVKPTMMSSEASDVWTEANLSAEVSQVIWRRAPGKLPLPKQEDAPVVYLGSFRGVQKPAGPSTSPDGNSRCPPAYTMVGLHNLEPRGERNIAFHPVSFPEEKAVHKEKPSFPYQDRPSTQESFRQKLAAFAGTTSGCHQGPGPLRESLPSEDDSDQRCSPSGDSEGGEYCSILDCCPGSPVAKAASQTAGSRGRHGGRDCSPTCWEQGKCSGPAEQEKRGPSFPKECCSQGPTAHPSCLGPKKLSLTSEAAISSDGLSCGSGSGSGSGASSPFVPHLESDYCSLMKEPAPEKQQDPGCPGVTPSRCLGLTGEPQPPAHPREATQPEPIYAESTKRKKAAPVPSKSQAKIEHAAAAQGQGQVCTGNAWAQKAASGWGRDSPDPTPQVSATITVMAAHPEEDHRTIYLSSPDSAVGVQWPRGPVSQNSEVGEEETSAGQGLSSRESHAHSASESKPKERPAIPPKLSKSSPVGSPVSPSAGGPPVSPLADLSDGSSGGSSIGPQPPSQGPADPAPSCRTNGVAISDPSRCPQPAASSASEQRRPRFQAGTWSRQCRIEEEEEVEQELLSHSWGRETKNGPTDHSNSTTWHRLHPTDGSSGQNSKVGTGMSKSASFAFEFPKDRSGIETFSPPPPPPKSRHLLKMNKSSSDLEKVSQGSAESLSPSFRGVHVSFTTGSTDSLASDSRTCSDGGPSSELAHSPTNSGKKLFAPVPFPSGSTEDVSPSGPQQPPPLPQKKIVSRAASSPDGFFWTQGSPKPGTASPKLNLSHSETNVHDESHFSYSLSPGNRHHPVFSSSDPLEKAFKGSGHWLPAAGLAGNRGGCGSPGLQCKGAPSASSSQLSVSSQASTGSTQLQLHGLLSNISSKEGTYAKLGGLYTQSLARLVAKCEDLFMGGQKKELHFNENNWSLFKLTCNKPCCDSGDAIYYCATCSEDPGSTYAVKICKAPEPKTVSYCSPSVPVHFNIQQDCGHFVASVPSSMLSSPDAPKDPVPALPTHPPAQEQDCVVVITREVPHQTASDFVRDSAASHQAEPEAYERRVCFLLLQLCNGLEHLKEHGIIHRDLCLENLLLVHCTLQAGPGPAPAPAPAPAPAAAAPPCSSAAPPAGGTLSPAAGPASPEGPREKQLPRLIISNFLKAKQKPGGTPNLQQKKSQARLAPEIVSASQYRKFDEFQTGILIYELLHQPNPFEVRAQLRERDYRQEDLPPLPALSLYSPGLQQLAHLLLEADPIKRIRIGEAKRVLQCLLWGPRRELVQQPGTSEEALCGTLHNWIDMKRALMMMKFAEKAVDRRRGVELEDWLCCQYLASAEPGALLQSLKLLQLL.

Phosphoserine is present on S148. Positions 184 to 193 are enriched in basic and acidic residues; the sequence is EEKAVHKEKP. Disordered stretches follow at residues 184 to 205 and 217 to 248; these read EEKA…STQE and TTSG…SGDS. Phosphotyrosine is present on residues Y253, Y365, and Y413. 2 disordered regions span residues 372–470 and 484–854; these read PAPE…TPQV and DHRT…HSET. A compositionally biased stretch (basic and acidic residues) spans 526–542; the sequence is RESHAHSASESKPKERP. Residues 546–576 show a composition bias toward low complexity; the sequence is PKLSKSSPVGSPVSPSAGGPPVSPLADLSDG. 2 stretches are compositionally biased toward polar residues: residues 660-671 and 678-695; these read NGPTDHSNSTTW and DGSS…SKSA. Residues S696 and S745 each carry the phosphoserine modification. 2 stretches are compositionally biased toward polar residues: residues 737–746 and 754–770; these read SQGSAESLSP and SFTT…SRTC. Residue S782 is modified to Phosphoserine. The segment covering 798–808 has biased composition (polar residues); the sequence is SGSTEDVSPSG. S826 is modified (phosphoserine). The interval 933 to 976 is required for homodimerization; the sequence is STQLQLHGLLSNISSKEGTYAKLGGLYTQSLARLVAKCEDLFMG. Positions 978–1329 constitute a Protein kinase domain; it reads QKKELHFNEN…EAKRVLQCLL (352 aa). Residues 1163–1173 are compositionally biased toward pro residues; the sequence is GPAPAPAPAPA. The segment at 1163–1206 is disordered; that stretch reads GPAPAPAPAPAPAAAAPPCSSAAPPAGGTLSPAAGPASPEGPRE. Low complexity predominate over residues 1174–1202; it reads PAAAAPPCSSAAPPAGGTLSPAAGPASPE. Positions 1331-1406 are required for homodimerization; the sequence is GPRRELVQQP…LQSLKLLQLL (76 aa).

It belongs to the protein kinase superfamily. In terms of assembly, homodimer. Dimerization leads to the catalytic activation of CSK. Interacts (via C-terminus) with RND2. Interacts with CSK (via SH2 domain) in a Tyr-413 phosphorylation-dependent manner; this interaction potentiates kinase activity of CSK. Interacts with PEAK1. Interacts with NOTCH1 intracellular domain (N1ICD). Forms a complex with N1ICD and MAML1, in a MAML1-dependent manner. In terms of processing, phosphorylated by CSK on Tyr-253, Tyr-365, and Tyr-413; Tyr-413 is a primary site of phosphorylation.

It is found in the cytoplasm. The protein resides in the cell junction. It localises to the focal adhesion. The protein localises to the nucleus. In terms of biological role, catalytically inactive protein kinase that acts as a scaffold protein. Functions as an effector of the small GTPase RND2, which stimulates RhoA activity and inhibits NGF-induced neurite outgrowth. Promotes Src family kinase (SFK) signaling by regulating the subcellular localization of CSK, a negative regulator of these kinases, leading to the regulation of cell morphology and motility by a CSK-dependent mechanism. Acts as a critical coactivator of Notch signaling. This is Inactive tyrosine-protein kinase PRAG1 from Homo sapiens (Human).